Here is a 260-residue protein sequence, read N- to C-terminus: MWFLALCLAMSLGWTGAEPHFQPRIIGGRECLKNSQPWQVAVYHNGEFACGGVLVNPEWVLTAAHCANSNCEVWLGRHNLSESEDEGQLVQVRKSFIHPLYKTKVPRAVIRPGEDRSHDLMLLHLEEPAKITKAVRVMDLPKKEPPLGSTCYVSGWGSTDPETIFHPGSLQCVDLKLLSNNQCAKVYTQKVTKFMLCAGVLEGKKDTCKGDSGGPLICDGELVGITSWGATPCGKPQMPSLYTRVMPHLMWIKDTMKANT.

The first 17 residues, 1 to 17, serve as a signal peptide directing secretion; that stretch reads MWFLALCLAMSLGWTGA. Residues 18 to 24 constitute a propeptide, activation peptide; the sequence is EPHFQPR. The Peptidase S1 domain maps to 25 to 257; that stretch reads IIGGRECLKN…HLMWIKDTMK (233 aa). 5 disulfides stabilise this stretch: cysteine 31–cysteine 172, cysteine 50–cysteine 66, cysteine 151–cysteine 218, cysteine 183–cysteine 197, and cysteine 208–cysteine 233. Histidine 65 functions as the Charge relay system in the catalytic mechanism. N-linked (GlcNAc...) asparagine glycosylation is present at asparagine 79. The active-site Charge relay system is aspartate 119. Serine 212 acts as the Charge relay system in catalysis.

It belongs to the peptidase S1 family. Kallikrein subfamily.

It catalyses the reaction Preferential cleavage of Arg-|-Xaa bonds in small molecule substrates. Highly selective action to release kallidin (lysyl-bradykinin) from kininogen involves hydrolysis of Met-|-Xaa or Leu-|-Xaa.. Functionally, this serine protease is found in dog seminal plasma, its exact physiological function is not known. This Canis lupus familiaris (Dog) protein is Arginine esterase.